The sequence spans 234 residues: MGKKIAKRLQTLQAKVEPQKVYSIQSGVSAVKSLASAKFDETVEVALRLGVDPRHADQMIRGAVVLPHGTGKKVRVAVFAKGIKADEAKNAGADVVGADDLAEEIKNGNINFDMVIATPDMMALVGKVGRILGPKGLMPNPKTGTVTIDVAKAVANAKSGQVNFRVDKKGIIHAPIGKASFNEEKILDNMLELVRAINRLKPTSAKGKYIRSSSLSLTMSPAIKLDSQELMDMK.

This sequence belongs to the universal ribosomal protein uL1 family. In terms of assembly, part of the 50S ribosomal subunit.

Functionally, binds directly to 23S rRNA. The L1 stalk is quite mobile in the ribosome, and is involved in E site tRNA release. In terms of biological role, protein L1 is also a translational repressor protein, it controls the translation of the L11 operon by binding to its mRNA. This is Large ribosomal subunit protein uL1 from Helicobacter hepaticus (strain ATCC 51449 / 3B1).